We begin with the raw amino-acid sequence, 573 residues long: Splicing factor U2af large subunit B (573 aa).

The segment covering 1–12 has biased composition (acidic residues); the sequence is MPDYEGNGEDID. Residues 1 to 187 are disordered; the sequence is MPDYEGNGED…DMAPPTSAML (187 aa). Positions 38 to 145 are enriched in basic and acidic residues; that stretch reads SDSKSQHSSR…QREHAKDRES (108 aa). Positions 161–173 are enriched in basic residues; it reads SRSRSRSRSKSKR. 3 consecutive RRM domains span residues 239-322, 359-437, and 478-564; these read RRVY…RPSD, DRIF…RANQ, and EVIS…YPEN.

It belongs to the splicing factor SR family. Expressed in stems, leaves and apical buds.

It is found in the nucleus. Its function is as follows. Necessary for the splicing of pre-mRNA. Binds to the U -enriched regions of plant introns. This is Splicing factor U2af large subunit B (U2AF65B) from Nicotiana plumbaginifolia (Leadwort-leaved tobacco).